Consider the following 199-residue polypeptide: ATP-dependent Clp protease proteolytic subunit 3 (199 aa).

The active-site Nucleophile is Ser-101. The active site involves His-126.

Belongs to the peptidase S14 family. As to quaternary structure, fourteen ClpP subunits assemble into 2 heptameric rings which stack back to back to give a disk-like structure with a central cavity, resembling the structure of eukaryotic proteasomes.

The protein resides in the cytoplasm. It catalyses the reaction Hydrolysis of proteins to small peptides in the presence of ATP and magnesium. alpha-casein is the usual test substrate. In the absence of ATP, only oligopeptides shorter than five residues are hydrolyzed (such as succinyl-Leu-Tyr-|-NHMec, and Leu-Tyr-Leu-|-Tyr-Trp, in which cleavage of the -Tyr-|-Leu- and -Tyr-|-Trp bonds also occurs).. Its function is as follows. Cleaves peptides in various proteins in a process that requires ATP hydrolysis. Has a chymotrypsin-like activity. Plays a major role in the degradation of misfolded proteins. The chain is ATP-dependent Clp protease proteolytic subunit 3 from Synechococcus elongatus (strain ATCC 33912 / PCC 7942 / FACHB-805) (Anacystis nidulans R2).